We begin with the raw amino-acid sequence, 214 residues long: CASP-like protein 3A1 (214 aa).

Residues 1–49 (MTNGQKIEVAVQLPESKVAATENNETMSGPLVVGGGVAKPFGRKADVMH) lie on the Cytoplasmic side of the membrane. A helical membrane pass occupies residues 50–70 (VILRLLCTITSVTAVSFMVTA). Topologically, residues 71–96 (HQSSTVSIYGFMLPVRSKWSFSHSFE) are extracellular. Residues 97 to 117 (YLVGVSAAVAAHSLLQLLISM) traverse the membrane as a helical segment. At 118-132 (SRLLRKSPVIPSRSH) the chain is on the cytoplasmic side. A helical membrane pass occupies residues 133 to 153 (AWLIFAGDQVFAYAMISAGAA). The Extracellular portion of the chain corresponds to 154-182 (ASGVTNLNRTGIQHTALPNFCKPLNYFCN). N-linked (GlcNAc...) asparagine glycosylation is present at asparagine 161. Residues 183-203 (HVAVSIAFAFISCLLLAALAV) traverse the membrane as a helical segment. The Cytoplasmic portion of the chain corresponds to 204–214 (QEVIWLSKSKY).

It belongs to the Casparian strip membrane proteins (CASP) family. As to quaternary structure, homodimer and heterodimers.

The protein localises to the cell membrane. This chain is CASP-like protein 3A1, found in Ricinus communis (Castor bean).